The following is a 91-amino-acid chain: Early E3B 10.4 kDa protein (91 aa).

A signal peptide spans 1-21; that stretch reads MVTVLLIFLCLPVIFSSSTFA. Over 22-33 the chain is Lumenal; sequence AVSDLDPECLAP. A helical membrane pass occupies residues 34-56; it reads FAVYLIFTFVTATCVCSIITLLI. Topologically, residues 57–91 are cytoplasmic; it reads TSLQFFDYYYVRIVYRRHHPRYQNPQIAALLQLQP.

It belongs to the adenoviridae E3B family.

It is found in the host endoplasmic reticulum membrane. Functionally, down-regulates the EGF receptor. The polypeptide is Early E3B 10.4 kDa protein (Homo sapiens (Human)).